Consider the following 172-residue polypeptide: Trypsin inhibitor DE-3 (172 aa).

2 cysteine pairs are disulfide-bonded: cysteine 39-cysteine 83 and cysteine 132-cysteine 139.

This sequence belongs to the protease inhibitor I3 (leguminous Kunitz-type inhibitor) family.

Inhibition of trypsin. The chain is Trypsin inhibitor DE-3 from Erythrina variegata (Indian coral tree).